We begin with the raw amino-acid sequence, 546 residues long: Chaperonin GroEL (546 aa).

ATP contacts are provided by residues 30 to 33, Lys-51, 87 to 91, Gly-415, 479 to 481, and Asp-495; these read TLGP, DGTTT, and NAA.

Belongs to the chaperonin (HSP60) family. Forms a cylinder of 14 subunits composed of two heptameric rings stacked back-to-back. Interacts with the co-chaperonin GroES.

The protein localises to the cytoplasm. The catalysed reaction is ATP + H2O + a folded polypeptide = ADP + phosphate + an unfolded polypeptide.. Together with its co-chaperonin GroES, plays an essential role in assisting protein folding. The GroEL-GroES system forms a nano-cage that allows encapsulation of the non-native substrate proteins and provides a physical environment optimized to promote and accelerate protein folding. The sequence is that of Chaperonin GroEL from Azotobacter vinelandii.